Here is a 162-residue protein sequence, read N- to C-terminus: Cytochrome c-type biogenesis protein CcmE (162 aa).

The Cytoplasmic portion of the chain corresponds to 1-8; it reads MNPVRKKR. A helical; Signal-anchor for type II membrane protein membrane pass occupies residues 9–29; the sequence is LIIVLAIVVGVGAAVGLALSA. Residues 30–162 are Periplasmic-facing; it reads LQQNINLFYT…GETSYNQEGK (133 aa). Residues histidine 124 and tyrosine 128 each coordinate heme. Basic and acidic residues predominate over residues 139–148; the sequence is DSGQLKHYEN. The interval 139–162 is disordered; it reads DSGQLKHYENGKAAGETSYNQEGK.

The protein belongs to the CcmE/CycJ family.

It is found in the cell inner membrane. Its function is as follows. Heme chaperone required for the biogenesis of c-type cytochromes. Transiently binds heme delivered by CcmC and transfers the heme to apo-cytochromes in a process facilitated by CcmF and CcmH. The polypeptide is Cytochrome c-type biogenesis protein CcmE (Pseudomonas aeruginosa (strain LESB58)).